Here is a 165-residue protein sequence, read N- to C-terminus: Lithostathine-1 (165 aa).

The signal sequence occupies residues 1 to 21; the sequence is MARNAYFILLSCLIVLSPSQG. A Pyrrolidone carboxylic acid modification is found at Gln-22. A C-type lectin domain is found at 33–163; that stretch reads ISCPEGSNAY…DAQYSFVCKF (131 aa). Cystine bridges form between Cys-35-Cys-46, Cys-63-Cys-161, and Cys-136-Cys-153. N-linked (GlcNAc...) asparagine glycosylation occurs at Asn-129.

Expressed only in regenerating islets and normal exocrine pancreas, but not in normal pancreatic islets. Expressed strongly in pancreas, moderately in gall bladder, and weakly in liver.

It is found in the secreted. Might act as an inhibitor of spontaneous calcium carbonate precipitation. The protein is Lithostathine-1 (Reg1) of Mus musculus (Mouse).